Here is a 601-residue protein sequence, read N- to C-terminus: Elongation factor 4 (601 aa).

Residues 7-189 (RNIRNFSIIA…AIVHRIPPPK (183 aa)) enclose the tr-type G domain. Residues 19-24 (DHGKST) and 136-139 (NKID) each bind GTP.

It belongs to the TRAFAC class translation factor GTPase superfamily. Classic translation factor GTPase family. LepA subfamily.

It is found in the cell inner membrane. It catalyses the reaction GTP + H2O = GDP + phosphate + H(+). Functionally, required for accurate and efficient protein synthesis under certain stress conditions. May act as a fidelity factor of the translation reaction, by catalyzing a one-codon backward translocation of tRNAs on improperly translocated ribosomes. Back-translocation proceeds from a post-translocation (POST) complex to a pre-translocation (PRE) complex, thus giving elongation factor G a second chance to translocate the tRNAs correctly. Binds to ribosomes in a GTP-dependent manner. This is Elongation factor 4 from Xanthomonas axonopodis pv. citri (strain 306).